Reading from the N-terminus, the 421-residue chain is ATP-dependent RNA helicase RhlB (421 aa).

The Q motif signature appears at 9-37; the sequence is QKFSDFALHPKVVEALEKKGFHNCTPIQA. The Helicase ATP-binding domain occupies 40-219; that stretch reads LPLTLAGRDV…FEQMNNAEYI (180 aa). Residue 53–60 participates in ATP binding; sequence AQTGTGKT. The short motif at 165-168 is the DEAD box element; that stretch reads DEAD. Positions 245–390 constitute a Helicase C-terminal domain; that stretch reads RLLQTLIEEE…VSKYNPDALM (146 aa). The segment at 392 to 421 is disordered; it reads DLPKPLRLTRPRTGNGPRRTGAPRNRRRSG. The segment covering 402–414 has biased composition (low complexity); that stretch reads PRTGNGPRRTGAP.

Belongs to the DEAD box helicase family. RhlB subfamily. As to quaternary structure, component of the RNA degradosome, which is a multiprotein complex involved in RNA processing and mRNA degradation.

The protein resides in the cytoplasm. The enzyme catalyses ATP + H2O = ADP + phosphate + H(+). In terms of biological role, DEAD-box RNA helicase involved in RNA degradation. Has RNA-dependent ATPase activity and unwinds double-stranded RNA. The sequence is that of ATP-dependent RNA helicase RhlB from Escherichia coli O157:H7.